The following is a 182-amino-acid chain: Carbonic anhydrase (182 aa).

Residues His-64, His-81, and His-86 each contribute to the Mg(2+) site.

This sequence belongs to the gamma-class carbonic anhydrase family. Homotrimer. Requires Mg(2+) as cofactor. Zn(2+) is required as a cofactor.

It catalyses the reaction hydrogencarbonate + H(+) = CO2 + H2O. Reversible hydration of carbon dioxide. This is Carbonic anhydrase from Geobacillus kaustophilus (strain HTA426).